The sequence spans 138 residues: Prefoldin subunit alpha (138 aa).

Belongs to the prefoldin subunit alpha family. Heterohexamer of two alpha and four beta subunits.

The protein resides in the cytoplasm. Molecular chaperone capable of stabilizing a range of proteins. Seems to fulfill an ATP-independent, HSP70-like function in archaeal de novo protein folding. The polypeptide is Prefoldin subunit alpha (Methanosphaera stadtmanae (strain ATCC 43021 / DSM 3091 / JCM 11832 / MCB-3)).